Reading from the N-terminus, the 433-residue chain is MENILAMVRDFGLFHLQWGQGIMILVGLVLLYLAIVKRFEPLLLVPIGFGGILSNLPDAGLAMSAIENAVYAAKPEVMTAFSEVLQLSSYMPADIKQALSSATPLQMTTLHLLAEQYQYSDGMLYLFYSIAIASGAGPLIIFMGVGAMTDFGPLLANPKTLLLGAAAQFGIFTTVLGALALSSLGVMDFSVAQAAAIGIIGGADGPTAIYVSSMLAPELLGAIAVAAYSYMALVPMIQPPIMRALTTQEERKIQMQQLRQVHKLEKIGFPLLLLILIALLLPSATPLLGMFCFGNLMRECGVVERLSDTAQNALINIVTIFLGLSVGSKLMADKFLQPQTIGILVLGIVAFCVGTAAGVLMAKLMNRFSTTKLNPLIGSAGVSAVPMAARVSNKVGLEANAQNFLLMHAMGPNVAGVIGSAVAAGVMIKYVMG.

The next 9 membrane-spanning stretches (helical) occupy residues 13 to 35 (LFHLQWGQGIMILVGLVLLYLAI), 125 to 147 (YLFYSIAIASGAGPLIIFMGVGA), 162 to 184 (LLGAAAQFGIFTTVLGALALSSL), 189 to 211 (FSVAQAAAIGIIGGADGPTAIYV), 215 to 237 (LAPELLGAIAVAAYSYMALVPMI), 267 to 289 (IGFPLLLLILIALLLPSATPLLG), 309 to 328 (TAQNALINIVTIFLGLSVGS), 340 to 362 (TIGILVLGIVAFCVGTAAGVLMA), and 404 to 426 (FLLMHAMGPNVAGVIGSAVAAGV).

Belongs to the GcdB/MmdB/OadB family. As to quaternary structure, heterotrimer of an alpha, a beta and a gamma subunit. It depends on Na(+) as a cofactor.

The protein localises to the cell membrane. It carries out the reaction oxaloacetate + 2 Na(+)(in) + H(+) = pyruvate + 2 Na(+)(out) + CO2. Catalyzes the decarboxylation of oxaloacetate coupled to Na(+) translocation. This chain is Probable oxaloacetate decarboxylase beta chain (oadB), found in Vibrio cholerae serotype O1 (strain ATCC 39315 / El Tor Inaba N16961).